The sequence spans 364 residues: CCA-adding enzyme (364 aa).

Residues Gly19 and Arg22 each contribute to the ATP site. The CTP site is built by Gly19 and Arg22. Asp32 and Asp34 together coordinate Mg(2+). Arg102, Arg148, and Arg151 together coordinate ATP. Arg102, Arg148, and Arg151 together coordinate CTP.

The protein belongs to the tRNA nucleotidyltransferase/poly(A) polymerase family. Bacterial CCA-adding enzyme type 2 subfamily. Requires Mg(2+) as cofactor.

It catalyses the reaction a tRNA precursor + 2 CTP + ATP = a tRNA with a 3' CCA end + 3 diphosphate. It carries out the reaction a tRNA with a 3' CCA end + 2 CTP + ATP = a tRNA with a 3' CCACCA end + 3 diphosphate. Functionally, catalyzes the addition and repair of the essential 3'-terminal CCA sequence in tRNAs without using a nucleic acid template. Adds these three nucleotides in the order of C, C, and A to the tRNA nucleotide-73, using CTP and ATP as substrates and producing inorganic pyrophosphate. tRNA 3'-terminal CCA addition is required both for tRNA processing and repair. Also involved in tRNA surveillance by mediating tandem CCA addition to generate a CCACCA at the 3' terminus of unstable tRNAs. While stable tRNAs receive only 3'-terminal CCA, unstable tRNAs are marked with CCACCA and rapidly degraded. This Bordetella bronchiseptica (strain ATCC BAA-588 / NCTC 13252 / RB50) (Alcaligenes bronchisepticus) protein is CCA-adding enzyme.